Consider the following 299-residue polypeptide: Undecaprenyl-diphosphatase (299 aa).

The next 8 helical transmembrane spans lie at 10-32 (LFSL…RNLV), 63-83 (PGVS…IAYF), 112-132 (LAIA…KLFW), 143-163 (LPSI…AESF), 178-198 (GFVV…RSGS), 213-233 (AARF…LVEL), 243-263 (GGVL…WLAI), and 276-296 (WIFV…WLSG).

The protein belongs to the UppP family.

It is found in the cell inner membrane. The catalysed reaction is di-trans,octa-cis-undecaprenyl diphosphate + H2O = di-trans,octa-cis-undecaprenyl phosphate + phosphate + H(+). Catalyzes the dephosphorylation of undecaprenyl diphosphate (UPP). Confers resistance to bacitracin. The chain is Undecaprenyl-diphosphatase from Prochlorococcus marinus (strain MIT 9313).